The primary structure comprises 887 residues: Alpha-amylase 3, chloroplastic (887 aa).

The transit peptide at 1–55 directs the protein to the chloroplast; sequence MSTVPIESLLHHSYLRHNSKVNRGNRSFIPISLNLRSHFTSNKLLHSIGKSVGVS. A disulfide bridge connects residues cysteine 499 and cysteine 587. Substrate is bound by residues 545–546 and 664–669; these read YM and RLDFVR. Residue aspartate 666 is the Nucleophile of the active site. The Proton donor role is filled by glutamate 691. Substrate contacts are provided by residues tryptophan 693, serine 695, glutamine 712, lysine 754, 760 to 762, histidine 773, glutamine 779, lysine 857, and tryptophan 884; that span reads GWW.

Belongs to the glycosyl hydrolase 13 family. Ca(2+) serves as cofactor. In terms of tissue distribution, expressed in developing siliques.

The protein resides in the plastid. It localises to the chloroplast. The enzyme catalyses Endohydrolysis of (1-&gt;4)-alpha-D-glucosidic linkages in polysaccharides containing three or more (1-&gt;4)-alpha-linked D-glucose units.. With respect to regulation, redox-regulated, with the highest activity under reducing conditions. The midpoint redox potential is -329 mV. The disulfide bridge between Cys-499 and Cys-587 inhibits catalysis. Inhibited by CuCl(2) and H(2)O(2). In terms of biological role, possesses endoamylolytic activity in vitro, but seems not required for breakdown of transitory starch in leaves. May be involved in the determination of the final structure of glucans by shortening long linear phospho-oligosaccharides in the chloroplast stroma. Can act on both soluble and insoluble glucan substrates to release small linear and branched malto-oligosaccharides. Works synergistically with beta-amylase toward efficient starch degradation. Has activity against p-nitrophenyl maltoheptaoside (BPNP-G7), amylopectin and beta-limit dextrin. Involved in stress-induced starch degradation. This chain is Alpha-amylase 3, chloroplastic, found in Arabidopsis thaliana (Mouse-ear cress).